Here is a 512-residue protein sequence, read N- to C-terminus: 2,3-bisphosphoglycerate-independent phosphoglycerate mutase (512 aa).

Asp12 and Ser62 together coordinate Mn(2+). Catalysis depends on Ser62, which acts as the Phosphoserine intermediate. Substrate is bound by residues His123, 153–154 (RD), Arg185, Arg191, 260–263 (RPDR), and Lys333. Residues Asp400, His404, Asp441, His442, and His460 each coordinate Mn(2+).

This sequence belongs to the BPG-independent phosphoglycerate mutase family. In terms of assembly, monomer. Mn(2+) is required as a cofactor.

The enzyme catalyses (2R)-2-phosphoglycerate = (2R)-3-phosphoglycerate. Its pathway is carbohydrate degradation; glycolysis; pyruvate from D-glyceraldehyde 3-phosphate: step 3/5. Catalyzes the interconversion of 2-phosphoglycerate and 3-phosphoglycerate. The polypeptide is 2,3-bisphosphoglycerate-independent phosphoglycerate mutase (Clostridium perfringens (strain SM101 / Type A)).